The chain runs to 255 residues: 5-oxoprolinase subunit A (255 aa).

This sequence belongs to the LamB/PxpA family. Forms a complex composed of PxpA, PxpB and PxpC.

The enzyme catalyses 5-oxo-L-proline + ATP + 2 H2O = L-glutamate + ADP + phosphate + H(+). Catalyzes the cleavage of 5-oxoproline to form L-glutamate coupled to the hydrolysis of ATP to ADP and inorganic phosphate. The sequence is that of 5-oxoprolinase subunit A from Pyrococcus horikoshii (strain ATCC 700860 / DSM 12428 / JCM 9974 / NBRC 100139 / OT-3).